We begin with the raw amino-acid sequence, 468 residues long: Midnolin (468 aa).

The Ubiquitin-like domain occupies 31–105 (MSLAIHSTTG…LTLVPTVEAG (75 aa)). Disordered stretches follow at residues 182-264 (PSIA…RSRK) and 404-447 (LRRK…LGLD). The segment covering 185 to 201 (ASPVSSPCRPVSSAARV) has biased composition (low complexity). Residues 202 to 213 (PPVPTSPSPASP) show a composition bias toward pro residues. Composition is skewed to low complexity over residues 237 to 260 (SPTA…SPAP) and 419 to 431 (SPSR…DSSS).

Interacts with GCK; the interaction occurs preferentially at low glucose levels. Interacts with the proteasome.

Its subcellular location is the nucleus. The protein localises to the nucleolus. It is found in the cytoplasm. The protein resides in the cytosol. Its function is as follows. Facilitates the ubiquitin-independent proteasomal degradation of stimulus-induced transcription factors such as FOSB, EGR1, NR4A1, and IRF4 to the proteasome for degradation. Promotes also the degradation of other substrates such as CBX4. Plays a role in inhibiting the activity of glucokinase GCK and both glucose-induced and basal insulin secretion. The protein is Midnolin (MIDN) of Homo sapiens (Human).